A 530-amino-acid polypeptide reads, in one-letter code: Glutamyl-tRNA reductase 2, chloroplastic (530 aa).

A chloroplast-targeting transit peptide spans 1-64 (MAVSSAFVVT…RCEISPSNKA (64 aa)). Substrate is bound by residues 134–137 (TCNR), Ser-194, 199–201 (EGQ), and Gln-205. Cys-135 acts as the Nucleophile in catalysis. An NADP(+)-binding site is contributed by 277-282 (GAGKMG).

This sequence belongs to the glutamyl-tRNA reductase family. Expressed in roots and flowers. Detected in leaves, hypocotyls and cotyledons.

It is found in the plastid. Its subcellular location is the chloroplast. The catalysed reaction is (S)-4-amino-5-oxopentanoate + tRNA(Glu) + NADP(+) = L-glutamyl-tRNA(Glu) + NADPH + H(+). Its pathway is porphyrin-containing compound metabolism; protoporphyrin-IX biosynthesis; 5-aminolevulinate from L-glutamyl-tRNA(Glu): step 1/2. It participates in porphyrin-containing compound metabolism; chlorophyll biosynthesis. Its function is as follows. Catalyzes the NADPH-dependent reduction of glutamyl-tRNA(Glu) to glutamate 1-semialdehyde (GSA). Probably involved in wound-induced supply of heme to defensive hemoproteins outside plastids. In Arabidopsis thaliana (Mouse-ear cress), this protein is Glutamyl-tRNA reductase 2, chloroplastic (HEMA2).